Reading from the N-terminus, the 105-residue chain is Co-chaperonin GroES (105 aa).

Belongs to the GroES chaperonin family. Heptamer of 7 subunits arranged in a ring. Interacts with the chaperonin GroEL.

Its subcellular location is the cytoplasm. In terms of biological role, together with the chaperonin GroEL, plays an essential role in assisting protein folding. The GroEL-GroES system forms a nano-cage that allows encapsulation of the non-native substrate proteins and provides a physical environment optimized to promote and accelerate protein folding. GroES binds to the apical surface of the GroEL ring, thereby capping the opening of the GroEL channel. The sequence is that of Co-chaperonin GroES from Parvibaculum lavamentivorans (strain DS-1 / DSM 13023 / NCIMB 13966).